We begin with the raw amino-acid sequence, 325 residues long: Casein kinase I isoform alpha (325 aa).

Position 2 is an N-acetylalanine (A2). S4 is subject to Phosphoserine. N6-acetyllysine is present on K8. Positions 17–285 constitute a Protein kinase domain; that stretch reads YKLVRKIGSG…YLRQLFRILF (269 aa). Residues 23–31 and K46 contribute to the ATP site; that span reads IGSGSFGDI. The Proton acceptor role is filled by D136.

The protein belongs to the protein kinase superfamily. CK1 Ser/Thr protein kinase family. Casein kinase I subfamily. Interacts with the Axin complex. Interacts with TUT1, leading to TUT1 phosphorylation. Interacts with FAM83A, FAM83B, FAM83C, FAM83D, FAM83E, FAM83F, FAM83G and FAM83H (via DUF1669). Interaction with FAM83H recruits CSNK1A1 to keratin filaments. In terms of processing, phosphorylated by MTOR in response to mitogenic stimulation, leading to its activation.

The protein localises to the cytoplasm. Its subcellular location is the cytoskeleton. It is found in the microtubule organizing center. The protein resides in the centrosome. It localises to the chromosome. The protein localises to the centromere. Its subcellular location is the kinetochore. It is found in the nucleus speckle. The protein resides in the cilium basal body. It localises to the spindle. The enzyme catalyses L-seryl-[protein] + ATP = O-phospho-L-seryl-[protein] + ADP + H(+). It catalyses the reaction L-threonyl-[protein] + ATP = O-phospho-L-threonyl-[protein] + ADP + H(+). Functionally, casein kinases are operationally defined by their preferential utilization of acidic proteins such as caseins as substrates. Can phosphorylate a large number of proteins. Participates in Wnt signaling. Phosphorylates CTNNB1 at 'Ser-45'. May phosphorylate PER1 and PER2. May play a role in segregating chromosomes during mitosis. May play a role in keratin cytoskeleton disassembly and thereby, it may regulate epithelial cell migration. Acts as a positive regulator of mTORC1 and mTORC2 signaling in response to nutrients by mediating phosphorylation of DEPTOR inhibitor. Acts as an inhibitor of NLRP3 inflammasome assembly by mediating phosphorylation of NLRP3. The protein is Casein kinase I isoform alpha (CSNK1A1) of Oryctolagus cuniculus (Rabbit).